The sequence spans 156 residues: Ribosome maturation factor RimP (156 aa).

It belongs to the RimP family.

The protein resides in the cytoplasm. Its function is as follows. Required for maturation of 30S ribosomal subunits. In Gloeobacter violaceus (strain ATCC 29082 / PCC 7421), this protein is Ribosome maturation factor RimP.